A 206-amino-acid polypeptide reads, in one-letter code: Pyridoxine/pyridoxamine 5'-phosphate oxidase (206 aa).

Residues 53–58, 68–69, K75, and Q97 contribute to the FMN site; these read RMVLLK and YT. K58 contacts substrate. Substrate is bound by residues Y115, R119, and S123. Residues 132 to 133 and W177 contribute to the FMN site; that span reads QS. Position 183-185 (183-185) interacts with substrate; that stretch reads RLH. R187 is a binding site for FMN.

Belongs to the pyridoxamine 5'-phosphate oxidase family. In terms of assembly, homodimer. The cofactor is FMN.

The enzyme catalyses pyridoxamine 5'-phosphate + O2 + H2O = pyridoxal 5'-phosphate + H2O2 + NH4(+). The catalysed reaction is pyridoxine 5'-phosphate + O2 = pyridoxal 5'-phosphate + H2O2. It participates in cofactor metabolism; pyridoxal 5'-phosphate salvage; pyridoxal 5'-phosphate from pyridoxamine 5'-phosphate: step 1/1. The protein operates within cofactor metabolism; pyridoxal 5'-phosphate salvage; pyridoxal 5'-phosphate from pyridoxine 5'-phosphate: step 1/1. Its function is as follows. Catalyzes the oxidation of either pyridoxine 5'-phosphate (PNP) or pyridoxamine 5'-phosphate (PMP) into pyridoxal 5'-phosphate (PLP). The sequence is that of Pyridoxine/pyridoxamine 5'-phosphate oxidase from Rhizobium etli (strain CIAT 652).